Reading from the N-terminus, the 398-residue chain is MAANNYTKKAVHFGAGNIGRGFVACFLHNSGYEVIFADVNADLINALNASPSYKVIEVGSEGTEESTITNYRAINSRTNEEELIQEIATAEVVTCSVGPNILKFIAPVIAKGIDRRSEDLPPVAVIACENAIGATDTLAEYIKDPKNTPSHRLENYEKRARFANSAIDRIVPAQDADAGLDVKLEKFYEWVVDRTPFKDMSPPDIKGINWVDNLLPYIERKLYTVNTGHATAAYHGYIRRKSTVYDALQDKDIQEEVKKALENTSHLITQKHGIDEQAQHEYVEKIVRRISNPHLEDAVERVGRAPLRKLSRKERFIGPAAELAEHGKDCSALLDAAEMAFRFQNVEGDEESAELAKIMASNKPEDVVKQVCGLNEQEKLFPKVVEVVQRVQADLHDD.

10 to 21 (AVHFGAGNIGRG) is an NAD(+) binding site. Lys221 is an active-site residue.

It belongs to the mannitol dehydrogenase family. As to quaternary structure, monomer.

It catalyses the reaction D-mannitol 1-phosphate + NAD(+) = beta-D-fructose 6-phosphate + NADH + H(+). In terms of biological role, catalyzes the NAD(H)-dependent interconversion of D-fructose 6-phosphate and D-mannitol 1-phosphate in the mannitol metabolic pathway. The chain is Mannitol-1-phosphate 5-dehydrogenase from Neurospora crassa (strain ATCC 24698 / 74-OR23-1A / CBS 708.71 / DSM 1257 / FGSC 987).